A 161-amino-acid polypeptide reads, in one-letter code: E3 ubiquitin ligase complex SCF subunit sconC (161 aa).

The tract at residues 102–161 (ILAANYLDIKGLLDVGCKTVANMIKGKSPEEIRKTFNIQNDFTPEEEDQIRRENEWAEDR) is interaction with the F-box domain of F-box proteins.

The protein belongs to the SKP1 family. As to quaternary structure, component of the SCF (SKP1-CUL1-F-box protein) E3 ubiquitin ligase complexes.

Its pathway is protein modification; protein ubiquitination. Its function is as follows. Essential component of the SCF (SKP1-CUL1-F-box protein) E3 ubiquitin ligase complexes, which mediate the ubiquitination and subsequent proteasomal degradation of target proteins. Controls sulfur metabolite repression, probably by mediating the inactivation or degradation of the metR transcription factor. The sequence is that of E3 ubiquitin ligase complex SCF subunit sconC (sconC) from Aspergillus flavus (strain ATCC 200026 / FGSC A1120 / IAM 13836 / NRRL 3357 / JCM 12722 / SRRC 167).